The sequence spans 258 residues: Global transcriptional regulator CodY (258 aa).

Positions Met-1 to Leu-156 are GAF domain. A DNA-binding region (H-T-H motif) is located at residues Ala-204–Arg-223.

It belongs to the CodY family.

It localises to the cytoplasm. Functionally, DNA-binding global transcriptional regulator which is involved in the adaptive response to starvation and acts by directly or indirectly controlling the expression of numerous genes in response to nutrient availability. During rapid exponential growth, CodY is highly active and represses genes whose products allow adaptation to nutrient depletion. The protein is Global transcriptional regulator CodY of Clostridium botulinum (strain ATCC 19397 / Type A).